Here is a 112-residue protein sequence, read N- to C-terminus: T cell receptor alpha variable 2 (112 aa).

The first 25 residues, 1–25 (MALQSTLGAVWLGLLLNSLWKVAES), serve as a signal peptide directing secretion. The Ig-like domain maps to 26 to 112 (KDQVFQPSTV…DAAVYYCAVE (87 aa)). A disulfide bridge connects residues C47 and C109. N48 and N84 each carry an N-linked (GlcNAc...) asparagine glycan.

Alpha-beta TR is a heterodimer composed of an alpha and beta chain; disulfide-linked. The alpha-beta TR is associated with the transmembrane signaling CD3 coreceptor proteins to form the TR-CD3 (TcR or TCR). The assembly of alpha-beta TR heterodimers with CD3 occurs in the endoplasmic reticulum where a single alpha-beta TR heterodimer associates with one CD3D-CD3E heterodimer, one CD3G-CD3E heterodimer and one CD247 homodimer forming a stable octameric structure. CD3D-CD3E and CD3G-CD3E heterodimers preferentially associate with TR alpha and TR beta chains, respectively. The association of the CD247 homodimer is the last step of TcR assembly in the endoplasmic reticulum and is required for transport to the cell surface.

The protein localises to the cell membrane. In terms of biological role, v region of the variable domain of T cell receptor (TR) alpha chain that participates in the antigen recognition. Alpha-beta T cell receptors are antigen specific receptors which are essential to the immune response and are present on the cell surface of T lymphocytes. Recognize peptide-major histocompatibility (MH) (pMH) complexes that are displayed by antigen presenting cells (APC), a prerequisite for efficient T cell adaptive immunity against pathogens. Binding of alpha-beta TR to pMH complex initiates TR-CD3 clustering on the cell surface and intracellular activation of LCK that phosphorylates the ITAM motifs of CD3G, CD3D, CD3E and CD247 enabling the recruitment of ZAP70. In turn ZAP70 phosphorylates LAT, which recruits numerous signaling molecules to form the LAT signalosome. The LAT signalosome propagates signal branching to three major signaling pathways, the calcium, the mitogen-activated protein kinase (MAPK) kinase and the nuclear factor NF-kappa-B (NF-kB) pathways, leading to the mobilization of transcription factors that are critical for gene expression and essential for T cell growth and differentiation. The T cell repertoire is generated in the thymus, by V-(D)-J rearrangement. This repertoire is then shaped by intrathymic selection events to generate a peripheral T cell pool of self-MH restricted, non-autoaggressive T cells. Post-thymic interaction of alpha-beta TR with the pMH complexes shapes TR structural and functional avidity. The sequence is that of T cell receptor alpha variable 2 from Homo sapiens (Human).